The sequence spans 659 residues: Exoribonuclease 2 (659 aa).

The 343-residue stretch at 189–531 (RKDLTALHFV…NHRLIKACIA (343 aa)) folds into the RNB domain. An S1 motif domain is found at 576-658 (KPEFQAEVQD…ETRSLIGNLV (83 aa)).

Belongs to the RNR ribonuclease family. RNase II subfamily.

It localises to the cytoplasm. The enzyme catalyses Exonucleolytic cleavage in the 3'- to 5'-direction to yield nucleoside 5'-phosphates.. Its function is as follows. Involved in mRNA degradation. Hydrolyzes single-stranded polyribonucleotides processively in the 3' to 5' direction. The chain is Exoribonuclease 2 from Actinobacillus succinogenes (strain ATCC 55618 / DSM 22257 / CCUG 43843 / 130Z).